Here is a 124-residue protein sequence, read N- to C-terminus: MRHYEIVFMVHPDQSEQVPAMIERYTASVKEAGGQVHRLEDWGRRQLAYPINKLHKAHYVLMNVEAPQSVIDELETNFRYNDAVLRNLIVHTKAAVTEASPMVKAKESKVAEAVAEVESEEAGE.

It belongs to the bacterial ribosomal protein bS6 family.

Its function is as follows. Binds together with bS18 to 16S ribosomal RNA. The polypeptide is Small ribosomal subunit protein bS6 (Actinobacillus pleuropneumoniae serotype 7 (strain AP76)).